A 131-amino-acid polypeptide reads, in one-letter code: PDZ domain-containing protein C52A11.3 (131 aa).

Residues 51-127 enclose the PDZ domain; that stretch reads LVKLQKDANR…RLYLQIARPH (77 aa).

The polypeptide is PDZ domain-containing protein C52A11.3 (Caenorhabditis elegans).